A 370-amino-acid chain; its full sequence is Ubiquitin carboxyl-terminal hydrolase 12 (370 aa).

The Required for plasma membrane localization of USP12/WDR20 motif lies at 1–4; the sequence is MEIL. The 331-residue stretch at 39–369 folds into the USP domain; that stretch reads FGLVNFGNTC…SGYILFYQSR (331 aa). Cys-48 serves as the catalytic Nucleophile. Over residues 146–157 the composition is skewed to basic and acidic residues; sequence QEKQNGRLRNGD. The tract at residues 146–168 is disordered; sequence QEKQNGRLRNGDVDSEDNNSTPD. The Zn(2+) site is built by Cys-186, Cys-189, Cys-233, and Cys-236. His-317 (proton acceptor) is an active-site residue.

It belongs to the peptidase C19 family. USP12/USP46 subfamily. In terms of assembly, interacts with WDR48. Interacts with WDR20; this interaction promotes translocation of the USP12 complex to the plasma membrane. Component of the USP12-WDR20-WDR48 deubiquitinating complex. Component of the USP12-DMWD-WDR48 deubiquitinating complex. Interacts with PHLPP1. Interacts with RBPJ. Interacts with CBP; this interaction blocks the acetyltransferase activity of CREBBP. Interacts with ITCH; the interaction is more efficient when both USP12 and WDR48/UAF1 are involved and may mediate recruitment of the USP12 deubiquitinating complex to Notch.

It is found in the nucleus. It localises to the cytoplasm. Its subcellular location is the cell membrane. The enzyme catalyses Thiol-dependent hydrolysis of ester, thioester, amide, peptide and isopeptide bonds formed by the C-terminal Gly of ubiquitin (a 76-residue protein attached to proteins as an intracellular targeting signal).. Activated by interaction with WDR20, WDR48 and DMWD through different allosteric mechanisms. In terms of biological role, deubiquitinating enzyme that plays various roles in the regulation of the immune response and inflammation. During TCR engagement and activation, translocates into the cytoplasm and deubiquitinates its substrates LAT and TRAT1 and prevents their lysosome-dependent degradation to stabilize the TCR signaling complex at the plasma membrane. Plays an essential role in the selective LPS-induced macrophage response through the activation of NF-kappa-B pathway. In addition, promotes that antiviral immune response through targeting DNA sensor IFI16 to inhibit its proteasome-dependent degradation. Participates in the interferon signaling pathway and antiviral response independently of its deubiquitinase activity by maintaining nuclear phosphorylated STAT1 levels via inhibition of its CREBBP-mediated acetylation and subsequent dephosphorylation. Plays an intrinsic role in promoting the differentiation, activation and proliferation of CD4(+) T-cell by activating the NF-kappa-B signaling pathway through deubiquitinating and stabilizing B-cell lymphoma/leukemia 10/BCL10. In myeloid-derived suppressor cells promotes the activation of the NF-kappa-B via deubiquitination and stabilization of RELA. Regulates the 'Lys-63'-linked polyubiquitin chains of BAX and thereby modulates the mitochondrial apoptotic process. Negative regulator of NOTCH signaling that specifically deubiquitinates non-activated NOTCH receptors to target them for lysosomal degradation; deubiquitination of NOTCH stimulates its transport form late endosomes to lysosomes. Protects neurons against HTT/huntingtin-induced polyglutamine expansion-dependent neurodegeneration through regulation of autophagic flux. This function is independent of deubiquitinase activity or of other components of the USP12-WDR20-WDR48 deubiquitinating complex. In complex with WDR48, acts as a potential tumor suppressor by positively regulating PHLPP1 stability. This chain is Ubiquitin carboxyl-terminal hydrolase 12, found in Rattus norvegicus (Rat).